The chain runs to 382 residues: Galactokinase (382 aa).

34–37 provides a ligand contact to substrate; it reads EHTD. Residue 124–130 coordinates ATP; sequence GAGLSSS. Mg(2+) is bound by residues Ser130 and Glu162. Catalysis depends on Asp174, which acts as the Proton acceptor. Tyr223 contacts substrate.

It belongs to the GHMP kinase family. GalK subfamily.

It is found in the cytoplasm. The catalysed reaction is alpha-D-galactose + ATP = alpha-D-galactose 1-phosphate + ADP + H(+). Its pathway is carbohydrate metabolism; galactose metabolism. In terms of biological role, catalyzes the transfer of the gamma-phosphate of ATP to D-galactose to form alpha-D-galactose-1-phosphate (Gal-1-P). The polypeptide is Galactokinase (Salmonella arizonae (strain ATCC BAA-731 / CDC346-86 / RSK2980)).